Reading from the N-terminus, the 146-residue chain is Arginine repressor (146 aa).

Belongs to the ArgR family.

Its subcellular location is the cytoplasm. Its pathway is amino-acid biosynthesis; L-arginine biosynthesis [regulation]. Its function is as follows. Regulates arginine biosynthesis genes. This is Arginine repressor from Parabacteroides distasonis (strain ATCC 8503 / DSM 20701 / CIP 104284 / JCM 5825 / NCTC 11152).